We begin with the raw amino-acid sequence, 184 residues long: Photosystem I assembly protein Ycf4 (184 aa).

2 helical membrane-spanning segments follow: residues 22 to 42 (FCWAFILFLGSLGFLLVGTSS) and 57 to 77 (IIFFPQGIVMSFYGIAGLFIS).

Belongs to the Ycf4 family.

It is found in the plastid. Its subcellular location is the chloroplast thylakoid membrane. Functionally, seems to be required for the assembly of the photosystem I complex. The chain is Photosystem I assembly protein Ycf4 from Capsella bursa-pastoris (Shepherd's purse).